The chain runs to 357 residues: 5-hydroxytryptamine receptor 5A (357 aa).

Over 1 to 36 (MDLPVNLTSFSLSTPSPLETNHSLGKDDLRPSSPLL) the chain is Extracellular. N-linked (GlcNAc...) asparagine glycans are attached at residues Asn-6 and Asn-21. Residues 37-63 (SVFGVLILTLLGFLVAATFAWNLLVLA) traverse the membrane as a helical segment. Topologically, residues 64 to 76 (TILRVRTFHRVPH) are cytoplasmic. The chain crosses the membrane as a helical span at residues 77-103 (NLVASMAVSDVLVAALVMPLSLVHELS). Residues 104–114 (GRRWQLGRRLC) are Extracellular-facing. Cys-114 and Cys-192 form a disulfide bridge. A helical membrane pass occupies residues 115–137 (QLWIACDVLCCTASIWNVTAIAL). Asp-121 provides a ligand contact to serotonin. Residues 138–155 (DRYWSITRHMEYTLRTRK) are Cytoplasmic-facing. Residues 156–176 (CVSNVMIALTWALSAVISLAP) traverse the membrane as a helical segment. Residues 177 to 198 (LLFGWGETYSEGSEECQVSREP) lie on the Extracellular side of the membrane. Residues 199–220 (SYAVFSTVGAFYLPLCVVLFVY) traverse the membrane as a helical segment. At 221–287 (WKIYKAAKFR…QKEQRAALMV (67 aa)) the chain is on the cytoplasmic side. A helical membrane pass occupies residues 288 to 312 (GILIGVFVLCWIPFFLTELISPLCS). The Extracellular segment spans residues 313 to 314 (CD). Residues 315-339 (IPAIWKSIFLWLGYSNSFFNPLIYT) form a helical membrane-spanning segment. Residues 340–357 (AFNKNYNSAFKNFFSRQH) lie on the Cytoplasmic side of the membrane.

The protein belongs to the G-protein coupled receptor 1 family.

The protein localises to the cell membrane. Its function is as follows. G-protein coupled receptor for 5-hydroxytryptamine (serotonin), a biogenic hormone that functions as a neurotransmitter, a hormone and a mitogen. Also functions as a receptor for ergot alkaloid derivatives and other psychoactive substances. Ligand binding causes a conformation change that triggers signaling via guanine nucleotide-binding proteins (G proteins) and modulates the activity of downstream effectors. HTR5A is coupled to G(i)/G(o) G alpha proteins and mediates inhibitory neurotransmission: signaling inhibits adenylate cyclase activity and activates a phosphatidylinositol-calcium second messenger system that regulates the release of Ca(2+) ions from intracellular stores. This is 5-hydroxytryptamine receptor 5A from Homo sapiens (Human).